Here is a 413-residue protein sequence, read N- to C-terminus: Multifunctional CCA protein (413 aa).

2 residues coordinate ATP: Gly8 and Arg11. Gly8 and Arg11 together coordinate CTP. Residues Asp21 and Asp23 each contribute to the Mg(2+) site. ATP contacts are provided by Arg91, Arg137, and Arg140. Arg91, Arg137, and Arg140 together coordinate CTP. In terms of domain architecture, HD spans 228–329; the sequence is TGIHTLMTLS…VKLFDNIDAW (102 aa).

Belongs to the tRNA nucleotidyltransferase/poly(A) polymerase family. Bacterial CCA-adding enzyme type 1 subfamily. As to quaternary structure, monomer. Can also form homodimers and oligomers. Requires Mg(2+) as cofactor. Ni(2+) serves as cofactor.

It carries out the reaction a tRNA precursor + 2 CTP + ATP = a tRNA with a 3' CCA end + 3 diphosphate. The enzyme catalyses a tRNA with a 3' CCA end + 2 CTP + ATP = a tRNA with a 3' CCACCA end + 3 diphosphate. In terms of biological role, catalyzes the addition and repair of the essential 3'-terminal CCA sequence in tRNAs without using a nucleic acid template. Adds these three nucleotides in the order of C, C, and A to the tRNA nucleotide-73, using CTP and ATP as substrates and producing inorganic pyrophosphate. tRNA 3'-terminal CCA addition is required both for tRNA processing and repair. Also involved in tRNA surveillance by mediating tandem CCA addition to generate a CCACCA at the 3' terminus of unstable tRNAs. While stable tRNAs receive only 3'-terminal CCA, unstable tRNAs are marked with CCACCA and rapidly degraded. The protein is Multifunctional CCA protein of Enterobacter sp. (strain 638).